The chain runs to 1234 residues: uncharacterized protein (1234 aa).

This is an uncharacterized protein from Schizosaccharomyces pombe (strain 972 / ATCC 24843) (Fission yeast).